A 356-amino-acid polypeptide reads, in one-letter code: Biotin synthase (356 aa).

In terms of domain architecture, Radical SAM core spans 54-278 (GEVQLCTLLS…VAVARITMPL (225 aa)). Residues Cys-69, Cys-73, and Cys-76 each coordinate [4Fe-4S] cluster. Cys-113, Cys-144, Cys-204, and Arg-282 together coordinate [2Fe-2S] cluster.

Belongs to the radical SAM superfamily. Biotin synthase family. In terms of assembly, homodimer. It depends on [4Fe-4S] cluster as a cofactor. [2Fe-2S] cluster is required as a cofactor.

It carries out the reaction (4R,5S)-dethiobiotin + (sulfur carrier)-SH + 2 reduced [2Fe-2S]-[ferredoxin] + 2 S-adenosyl-L-methionine = (sulfur carrier)-H + biotin + 2 5'-deoxyadenosine + 2 L-methionine + 2 oxidized [2Fe-2S]-[ferredoxin]. The protein operates within cofactor biosynthesis; biotin biosynthesis; biotin from 7,8-diaminononanoate: step 2/2. Functionally, catalyzes the conversion of dethiobiotin (DTB) to biotin by the insertion of a sulfur atom into dethiobiotin via a radical-based mechanism. This chain is Biotin synthase, found in Novosphingobium aromaticivorans (strain ATCC 700278 / DSM 12444 / CCUG 56034 / CIP 105152 / NBRC 16084 / F199).